Here is a 90-residue protein sequence, read N- to C-terminus: uncharacterized protein (90 aa).

This is an uncharacterized protein from Thermoproteus tenax (TTV1).